The following is a 395-amino-acid chain: Mitogen-activated protein kinase 6 (395 aa).

Residues 1–35 (MDGGSGQPAADTEMTEAPGGFPAAAPSPQMPGIEN) are disordered. The span at 17–27 (APGGFPAAAPS) shows a compositional bias: low complexity. Residues 63–348 (KPPIMPIGKG…VLDALAHPYL (286 aa)) form the Protein kinase domain. Residues 69 to 77 (IGKGAYGIV) and K92 contribute to the ATP site. D189 serves as the catalytic Proton acceptor. Phosphothreonine is present on T221. Positions 221-223 (TEY) match the TXY motif. Y223 is subject to Phosphotyrosine. Position 226 is a phosphothreonine (T226).

This sequence belongs to the protein kinase superfamily. CMGC Ser/Thr protein kinase family. MAP kinase subfamily. Interacts with MEKK1, MKK1 and MKK2. May form a ternary complex with MEKK1 and MKK1 or MKK2. Interacts with NDPK2, AP2C1, MKP1 and PTP1. Interacts with DSPTP1B/MKP2, especially during HR-like responses triggered by fungal elicitors. Interacts with MKK4, MKK5 and MKK6. Binds to LIP5. Interacts with VQ4 and IKU1/VQ14. Interacts with RACK1A, RACK1B and RACK1C. Interacts with PTP1. Interacts with FLZ9. Binds to BASL and YDA. Post-translationally, dually phosphorylated on Thr-221 and Tyr-223, which activates the enzyme. Dephosphorylated by DSPTP1B/MKP2.

The protein localises to the cytoplasm. It localises to the nucleus. It is found in the cell cortex. The catalysed reaction is L-seryl-[protein] + ATP = O-phospho-L-seryl-[protein] + ADP + H(+). It catalyses the reaction L-threonyl-[protein] + ATP = O-phospho-L-threonyl-[protein] + ADP + H(+). Activated by threonine and tyrosine phosphorylation. Activated by the MAP kinase kinases MKK2, MKK3, MKK4, MKK5, MKK7 and MKK9. Activated in response to touch, wounding, low temperature, low humidity, salt stress, hydrogen peroxide, ozone, ACC (an ethylene precursor), jasmonic acid (JA), mastoparan and UVC. Activated in response to elicitors: oligogalacturonides, hexameric chitin fragments, fungal xylanase, and the bacterial flagellin and harpin. Activated upon Pseudomonas syringae pv. tomato DC3000 infection. Repressed by the protein phosphatase 2C AP2C1 and the protein-tyrosine-phosphatases MKP1 and PTP1. Repressed by DSPTP1B/MKP2-mediated dephosphorylation. Activated by polarized BASL. Triggered by MKKK20 in response to various abiotic stresses, including osmotic stress, cold and reactive oxygen species (ROS). Activated by MKK5 in response to abscisic acid (ABA). In terms of biological role, mitogen-activated protein kinase (MAPK) which regulates abscisic acid (ABA) responses in a MAPKKK20-MKK5-MPK6 cascade involved in root growth (e.g. root cell division and elongation) and stomatal response. Involved in oxidative stress-mediated signaling cascade (such as ozone). Involved in the innate immune MAP kinase signaling cascade (MEKK1, MKK4/MKK5 and MPK3/MPK6) downstream of bacterial flagellin receptor FLS2. May be involved in hypersensitive response (HR)-mediated signaling cascade by modulating LIP5 phosphorylation and subsequent multivesicular bodies (MVBs) trafficking. May phosphorylate regulators of WRKY transcription factors. Phosphorylates 1-aminocyclopropane-1-carboxylic acid synthases (ACS2 and ACS6) and may be involved in the regulation of bacterial elicitor flagellin-induced ethylene production. Regulates locally gene-mediated and basal resistance response to certain pathogens. May be involved in the cold and salinity stress-mediated MAP kinase signaling cascade (MEKK1, MKK1/MKK2 and MPK4/MPK6). MKK1-MPK6 module mediates abscisic acid (ABA)-dependent CAT1 expression with H(2)O(2) production and response to drought and salt stress. MKK1-MPK6 module is also involved in sugar signaling during the process of seed germination. MKK3-MPK6 module plays an important role in the jasmonate signal transduction pathway through the negative regulation of MYC2/JIN1 expression. MKK9-MPK3/MPK6 module phosphorylates and activates EIN3, leading to the promotion of EIN3-mediated transcription in ethylene signaling. MPK3/MPK6 cascade regulates camalexin synthesis through transcriptional regulation of the biosynthetic genes after pathogen infection. MKK9-MPK6 module positively regulates leaf senescence. YDA-MKK4/MKK5-MPK3/MPK6 module regulates stomatal cell fate before the guard mother cell (GMC) is specified. When activated, reinforces the feedback loop by phosphorylating BASL, and inhibits stomatal fate by phosphorylating SPCH. This MAPK cascade also functions downstream of the ER receptor in regulating coordinated local cell proliferation, which shapes the morphology of plant organs. This chain is Mitogen-activated protein kinase 6, found in Arabidopsis thaliana (Mouse-ear cress).